Consider the following 335-residue polypeptide: MSERIGVIGAGSWGTTLANLLARKGLDVTLWAYEAELVEEMRATRVNSLFLPGIELAPALSFTNSLEEAATGKDFLVLVSPSQVMRGVLAQLAPLLRPGVVLVNASKGIELDTLMTMDQVCAAVLPPEVARCFSVLSGPSFAREVSLEMPTAVVAASGDPAVAAAVQRLFTTPSFRVYTNTDVVGVEIGGALKNVIAVAAGISDGLGLGHNTRAALITRGLAEMTRLGLSMGAQPETFAGLAGMGDLVLTCTGDLSRNRTVGMKLGQGMKLADVLGEMRMVAEGVKTAESAYRLARRTGVEMPITEKVYQVLHEDKPARQAVMELMTRDLKAERW.

NADPH is bound by residues serine 12, tryptophan 13, and lysine 107. Sn-glycerol 3-phosphate contacts are provided by lysine 107, glycine 138, and serine 140. Alanine 142 provides a ligand contact to NADPH. Residues lysine 193, aspartate 246, serine 256, arginine 257, and asparagine 258 each coordinate sn-glycerol 3-phosphate. Residue lysine 193 is the Proton acceptor of the active site. Position 257 (arginine 257) interacts with NADPH. Valine 281 and glutamate 283 together coordinate NADPH.

The protein belongs to the NAD-dependent glycerol-3-phosphate dehydrogenase family.

Its subcellular location is the cytoplasm. It carries out the reaction sn-glycerol 3-phosphate + NAD(+) = dihydroxyacetone phosphate + NADH + H(+). It catalyses the reaction sn-glycerol 3-phosphate + NADP(+) = dihydroxyacetone phosphate + NADPH + H(+). It participates in membrane lipid metabolism; glycerophospholipid metabolism. Its function is as follows. Catalyzes the reduction of the glycolytic intermediate dihydroxyacetone phosphate (DHAP) to sn-glycerol 3-phosphate (G3P), the key precursor for phospholipid synthesis. The chain is Glycerol-3-phosphate dehydrogenase [NAD(P)+] from Geobacter sulfurreducens (strain ATCC 51573 / DSM 12127 / PCA).